A 216-amino-acid chain; its full sequence is MTRNDLLDRLATTQASALETQGLGLVPMVVEQSGRGERAYDIYSRLLKERVVFMVGEVNDQTANLVVAQLLFLESENPDKDVSLYINSPGGSVSAGLAIYDTMQFIKPDVQTLCMGMAASMGAFLLAAGAKGKRSALPNSRIMIHQPLGGARGQASDIEIQAREILYLRERLNSILSEVTGQPVEKIARDTDRDNFMSGDQAVDYGLIDKVITRRS.

Residue Ser120 is the Nucleophile of the active site. His145 is an active-site residue.

Belongs to the peptidase S14 family. In terms of assembly, fourteen ClpP subunits assemble into 2 heptameric rings which stack back to back to give a disk-like structure with a central cavity, resembling the structure of eukaryotic proteasomes.

It is found in the cytoplasm. It catalyses the reaction Hydrolysis of proteins to small peptides in the presence of ATP and magnesium. alpha-casein is the usual test substrate. In the absence of ATP, only oligopeptides shorter than five residues are hydrolyzed (such as succinyl-Leu-Tyr-|-NHMec, and Leu-Tyr-Leu-|-Tyr-Trp, in which cleavage of the -Tyr-|-Leu- and -Tyr-|-Trp bonds also occurs).. In terms of biological role, cleaves peptides in various proteins in a process that requires ATP hydrolysis. Has a chymotrypsin-like activity. Plays a major role in the degradation of misfolded proteins. The protein is ATP-dependent Clp protease proteolytic subunit of Cupriavidus metallidurans (strain ATCC 43123 / DSM 2839 / NBRC 102507 / CH34) (Ralstonia metallidurans).